The primary structure comprises 335 residues: Beta-ketoacyl-[acyl-carrier-protein] synthase III (335 aa).

Residues cysteine 118 and histidine 259 contribute to the active site. The interval glutamine 260–arginine 264 is ACP-binding. Residue asparagine 289 is part of the active site.

The protein belongs to the thiolase-like superfamily. FabH family. In terms of assembly, homodimer.

The protein localises to the cytoplasm. It carries out the reaction malonyl-[ACP] + acetyl-CoA + H(+) = 3-oxobutanoyl-[ACP] + CO2 + CoA. It functions in the pathway lipid metabolism; fatty acid biosynthesis. Its function is as follows. Catalyzes the condensation reaction of fatty acid synthesis by the addition to an acyl acceptor of two carbons from malonyl-ACP. Catalyzes the first condensation reaction which initiates fatty acid synthesis and may therefore play a role in governing the total rate of fatty acid production. Possesses both acetoacetyl-ACP synthase and acetyl transacylase activities. Its substrate specificity determines the biosynthesis of branched-chain and/or straight-chain of fatty acids. The polypeptide is Beta-ketoacyl-[acyl-carrier-protein] synthase III (Chlamydia caviae (strain ATCC VR-813 / DSM 19441 / 03DC25 / GPIC) (Chlamydophila caviae)).